Here is a 531-residue protein sequence, read N- to C-terminus: Achacin (531 aa).

The signal sequence occupies residues 1 to 22; it reads MLLLNSALFILCLVCWLPGTSS. A propeptide spanning residues 23 to 29 is cleaved from the precursor; it reads SRVLTRR. N-linked (GlcNAc...) asparagine glycosylation is found at Asn112, Asn150, Asn308, and Asn392.

To A.kurodai aplysianin-A. In terms of assembly, homodimer. In terms of tissue distribution, collar tissue.

Its function is as follows. Antibacterial glycoprotein. The protein is Achacin of Lissachatina fulica (Giant African land snail).